Here is a 693-residue protein sequence, read N- to C-terminus: Probable L-type lectin-domain containing receptor kinase VI.1 (693 aa).

Positions 1-22 (MGIARSINSFMFFFFLMILSNA) are cleaved as a signal peptide. Residues Asn21, Asn44, Asn71, Asn89, Asn141, Asn180, and Asn223 are each glycosylated (N-linked (GlcNAc...) asparagine). The Extracellular portion of the chain corresponds to 23 to 311 (SKSSVLAEAT…SNKKGYNSQV (289 aa)). A legume-lectin like region spans residues 33 to 279 (TAKFTFIGFK…AHYVMGWSFS (247 aa)). The chain crosses the membrane as a helical span at residues 312–332 (IVLIVALSIVTLVLLVLLFIF). The Cytoplasmic segment spans residues 333–693 (VMYKRRIQEE…VSSSSIVSGR (361 aa)). Residues 368-642 (FKESEIIGTG…LRYLNGEENV (275 aa)) form the Protein kinase domain. Residues 374–382 (IGTGGFGIV) and Lys396 each bind ATP. Residue Asp495 is the Proton acceptor of the active site. The interval 670-693 (DRASSSNTFSSFSNVSSSSIVSGR) is disordered.

It in the C-terminal section; belongs to the protein kinase superfamily. Ser/Thr protein kinase family. In the N-terminal section; belongs to the leguminous lectin family.

The protein localises to the cell membrane. It catalyses the reaction L-seryl-[protein] + ATP = O-phospho-L-seryl-[protein] + ADP + H(+). The catalysed reaction is L-threonyl-[protein] + ATP = O-phospho-L-threonyl-[protein] + ADP + H(+). The polypeptide is Probable L-type lectin-domain containing receptor kinase VI.1 (LECRK61) (Arabidopsis thaliana (Mouse-ear cress)).